A 148-amino-acid chain; its full sequence is SPbeta prophage-derived disulfide bond formation protein B (148 aa).

The chain crosses the membrane as a helical span at residues 7–26; it reads KSFFLLLFFLSFFGTMASLF. C36 and C39 form a disulfide bridge. Helical transmembrane passes span 41-60 and 67-84; these read YQRIFLYPIPIILLIGLLKK and YVVFLSSIGLIIAFYHYI. An intrachain disulfide couples C95 to C102. The helical transmembrane segment at 111–135 threads the bilayer; that stretch reads GFITLPLMSSVCFALIFGIGLKLII.

Belongs to the DsbB family. BdbC subfamily.

The protein localises to the cell membrane. Its function is as follows. Important but not absolutely essential for the production of the lantibiotic sublancin 168, it may also be required for the stability of other secreted proteins. Not required for competence for DNA uptake. The polypeptide is SPbeta prophage-derived disulfide bond formation protein B (bdbB) (Bacillus subtilis (strain 168)).